Here is a 197-residue protein sequence, read N- to C-terminus: Adenylate kinase (197 aa).

16–21 (GAGKGT) lines the ATP pocket. The segment at 36–65 (STGDILRDHVARGTALGQQAGPLMEAGQLV) is NMP. Residues Thr-37, Arg-42, 63–65 (QLV), 90–93 (GFPR), and Gln-97 contribute to the AMP site. The tract at residues 131–147 (DRGRQAVAEGRAPRADD) is LID. Arg-132 contributes to the ATP binding site. Positions 137 to 158 (VAEGRAPRADDNEETARKRQQV) are disordered. The span at 141–153 (RAPRADDNEETAR) shows a compositional bias: basic and acidic residues. AMP is bound by residues Arg-144 and Arg-155. Position 183 (Gly-183) interacts with ATP.

The protein belongs to the adenylate kinase family. Monomer.

It localises to the cytoplasm. The catalysed reaction is AMP + ATP = 2 ADP. It participates in purine metabolism; AMP biosynthesis via salvage pathway; AMP from ADP: step 1/1. Functionally, catalyzes the reversible transfer of the terminal phosphate group between ATP and AMP. Plays an important role in cellular energy homeostasis and in adenine nucleotide metabolism. This is Adenylate kinase from Deinococcus radiodurans (strain ATCC 13939 / DSM 20539 / JCM 16871 / CCUG 27074 / LMG 4051 / NBRC 15346 / NCIMB 9279 / VKM B-1422 / R1).